The primary structure comprises 359 residues: Cyclic AMP response element-binding protein B (359 aa).

Disordered stretches follow at residues 1–73 (MDNS…AQGG) and 185–238 (VRNK…FTEI). A compositionally biased stretch (low complexity) spans 9–32 (NGNSSAASGSNDVVDVVAQQAAAA). The segment covering 33–47 (VGGGGGGGGGGGGGN) has biased composition (gly residues). Over residues 48–70 (PQQQQQNPQSTTAGGPTGATNNA) the composition is skewed to low complexity. Residues 198-257 (KPEPNTQHPEDSDESLSDDDSQHHRSELTRRPSYNKIFTEISGPDMSGASLPMSDGVLNS) form the KID domain. Phosphoserine is present on residues Ser-209, Ser-212, and Ser-214. Over residues 217 to 227 (DSQHHRSELTR) the composition is skewed to basic and acidic residues. Positions 300 to 359 (TRKREIRLQKNREAARECRRKKKEYIKCLENRVAVLENQNKALIEELKSLKELYCQTKND) constitute a bZIP domain. The tract at residues 301–326 (RKREIRLQKNREAARECRRKKKEYIK) is basic motif. Residues 328–349 (LENRVAVLENQNKALIEELKSL) form a leucine-zipper region.

Belongs to the bZIP family. ATF subfamily. As to quaternary structure, homodimer. Most cells of the adult brain; cell bodies, but not neuropil.

Its subcellular location is the nucleus. Its function is as follows. Isoform E is a PKA-dependent transcriptional activator. Isoform J is a direct antagonist of activation by isoform E in cell culture. Binds the cAMP response element (CRE) (consensus: 5'-GTGACGT[AC][AG]-3'), a sequence present in many viral and cellular promoters. Has a role in long-term memory. The protein is Cyclic AMP response element-binding protein B of Drosophila melanogaster (Fruit fly).